The following is a 794-amino-acid chain: Mitochondrial intermediate peptidase (794 aa).

The transit peptide at 1 to 39 directs the protein to the mitochondrion; the sequence is MRVTSSRLLQGGSLVSRVLKRRLNNASRTKKGWFSTRTL. Histidine 581 contacts Zn(2+). Glutamate 582 is an active-site residue. Zn(2+) contacts are provided by histidine 585 and histidine 588.

Belongs to the peptidase M3 family. Zn(2+) serves as cofactor.

It is found in the mitochondrion matrix. It carries out the reaction Release of an N-terminal octapeptide as second stage of processing of some proteins imported into the mitochondrion.. Functionally, cleaves proteins, imported into the mitochondrion, to their mature size. While most mitochondrial precursor proteins are processed to the mature form in one step by mitochondrial processing peptidase (MPP), the sequential cleavage by MIP of an octapeptide after initial processing by MPP is a required step for a subgroup of nuclear-encoded precursor proteins destined for the matrix or the inner membrane. The chain is Mitochondrial intermediate peptidase (OCT1) from Debaryomyces hansenii (strain ATCC 36239 / CBS 767 / BCRC 21394 / JCM 1990 / NBRC 0083 / IGC 2968) (Yeast).